Reading from the N-terminus, the 432-residue chain is Tol-Pal system protein TolB (432 aa).

Positions 1–29 are cleaved as a signal peptide; sequence MMRNVWKSGLRRSAWIGLLMVLCVGVARA.

Belongs to the TolB family. In terms of assembly, the Tol-Pal system is composed of five core proteins: the inner membrane proteins TolA, TolQ and TolR, the periplasmic protein TolB and the outer membrane protein Pal. They form a network linking the inner and outer membranes and the peptidoglycan layer.

The protein resides in the periplasm. Its function is as follows. Part of the Tol-Pal system, which plays a role in outer membrane invagination during cell division and is important for maintaining outer membrane integrity. The protein is Tol-Pal system protein TolB of Ralstonia nicotianae (strain ATCC BAA-1114 / GMI1000) (Ralstonia solanacearum).